Consider the following 263-residue polypeptide: DNA repair protein RecO (263 aa).

Residues 243–263 are disordered; that stretch reads DRKETARETVPTSDGTASNAV. A compositionally biased stretch (polar residues) spans 252 to 263; it reads VPTSDGTASNAV.

This sequence belongs to the RecO family.

Its function is as follows. Involved in DNA repair and RecF pathway recombination. This is DNA repair protein RecO from Neisseria meningitidis serogroup C / serotype 2a (strain ATCC 700532 / DSM 15464 / FAM18).